The chain runs to 234 residues: (5-formylfuran-3-yl)methyl phosphate synthase (234 aa).

Lysine 27 serves as the catalytic Schiff-base intermediate with substrate. The active-site Proton acceptor is the lysine 85.

Belongs to the MfnB family.

It carries out the reaction 2 D-glyceraldehyde 3-phosphate = 4-(hydroxymethyl)-2-furancarboxaldehyde phosphate + phosphate + 2 H2O. It functions in the pathway cofactor biosynthesis; methanofuran biosynthesis. Functionally, catalyzes the formation of 4-(hydroxymethyl)-2-furancarboxaldehyde phosphate (4-HFC-P) from two molecules of glyceraldehyde-3-P (GA-3-P). This Methanosarcina barkeri (strain Fusaro / DSM 804) protein is (5-formylfuran-3-yl)methyl phosphate synthase.